Here is a 238-residue protein sequence, read N- to C-terminus: 2-C-methyl-D-erythritol 4-phosphate cytidylyltransferase (238 aa).

Belongs to the IspD/TarI cytidylyltransferase family. IspD subfamily.

The catalysed reaction is 2-C-methyl-D-erythritol 4-phosphate + CTP + H(+) = 4-CDP-2-C-methyl-D-erythritol + diphosphate. It functions in the pathway isoprenoid biosynthesis; isopentenyl diphosphate biosynthesis via DXP pathway; isopentenyl diphosphate from 1-deoxy-D-xylulose 5-phosphate: step 2/6. Functionally, catalyzes the formation of 4-diphosphocytidyl-2-C-methyl-D-erythritol from CTP and 2-C-methyl-D-erythritol 4-phosphate (MEP). The chain is 2-C-methyl-D-erythritol 4-phosphate cytidylyltransferase from Leptospira interrogans serogroup Icterohaemorrhagiae serovar copenhageni (strain Fiocruz L1-130).